We begin with the raw amino-acid sequence, 78 residues long: Large ribosomal subunit protein bL28 (78 aa).

The disordered stretch occupies residues 1-23; that stretch reads MSRVCQVTGKKPMVGNNRSHAKN.

The protein belongs to the bacterial ribosomal protein bL28 family.

The protein is Large ribosomal subunit protein bL28 of Shewanella frigidimarina (strain NCIMB 400).